The sequence spans 562 residues: Tissue-type plasminogen activator (562 aa).

The signal sequence occupies residues 1–19 (MYALKRELWCVLLLCGAIC). Residues 20–32 (TSPSQETHRRLRR) constitute a propeptide that is removed on maturation. A propeptide spans 33 to 35 (GVR) (removed by plasmin). The region spanning 39 to 81 (VTCRDEKTQMIYQQHQSWLRPLLRGNRVEHCWCNDGQTQCHSV) is the Fibronectin type-I domain. Intrachain disulfides connect Cys-41/Cys-71, Cys-69/Cys-78, Cys-86/Cys-97, Cys-91/Cys-108, Cys-110/Cys-119, Cys-127/Cys-208, Cys-148/Cys-190, Cys-179/Cys-203, Cys-215/Cys-296, Cys-236/Cys-278, Cys-267/Cys-291, Cys-299/Cys-430, Cys-342/Cys-358, Cys-350/Cys-419, Cys-444/Cys-519, Cys-476/Cys-492, and Cys-509/Cys-537. The segment at 42–52 (RDEKTQMIYQQ) is important for binding to annexin A2. An EGF-like domain is found at 82–120 (PVKSCSEPRCFNGGTCLQAIYFSDFVCQCPVGFIGRQCE). O-linked (Fuc) threonine glycosylation occurs at Thr-96. Kringle domains follow at residues 126-208 (TCYE…TPAC) and 214-296 (ECYT…LPQC). An N-linked (GlcNAc...) asparagine glycan is attached at Asn-152. The 251-residue stretch at 311 to 561 (IKGGLYADIT…YLNWIRDNTR (251 aa)) folds into the Peptidase S1 domain. Active-site charge relay system residues include His-357 and Asp-406. N-linked (GlcNAc...) asparagine glycosylation is present at Asn-483. The Charge relay system role is filled by Ser-513.

This sequence belongs to the peptidase S1 family. Heterodimer of chain A and chain B held by a disulfide bond. Binds to fibrin with high affinity. This interaction leads to an increase in the catalytic efficiency of the enzyme due to an increase in affinity for plasminogen. Similarly, binding to heparin increases the activation of plasminogen. Binds to annexin A2, cytokeratin-8, fibronectin and laminin. Binds to mannose receptor and the low-density lipoprotein receptor-related protein (LRP1); these proteins are involved in TPA clearance. Binds LRP1B; binding is followed by internalization and degradation. Forms heterodimer with SERPINA5. Interacts with SERPINE1. In complex with SERPINE1, interacts with SORL1. In terms of processing, the single chain, almost fully active enzyme, can be further processed into a two-chain fully active form by a cleavage after Arg-310 catalyzed by plasmin, tissue kallikrein or factor Xa.

Its subcellular location is the secreted. The protein localises to the extracellular space. The enzyme catalyses Specific cleavage of Arg-|-Val bond in plasminogen to form plasmin.. Inhibited by SERPINA5. Inhibited by SERPINE1. Functionally, converts the abundant, but inactive, zymogen plasminogen to plasmin by hydrolyzing a single Arg-Val bond in plasminogen. By controlling plasmin-mediated proteolysis, it plays an important role in tissue remodeling and degradation, in cell migration and many other physiopathological events. During oocyte activation, plays a role in cortical granule reaction in the zona reaction, which contributes to the block to polyspermy. This chain is Tissue-type plasminogen activator (PLAT), found in Sus scrofa (Pig).